Consider the following 599-residue polypeptide: Elongation factor 4 (599 aa).

In terms of domain architecture, tr-type G spans 2 to 184; that stretch reads KHIRNFSIIA…RLVRDIPPPQ (183 aa). GTP contacts are provided by residues 14 to 19 and 131 to 134; these read DHGKST and NKID.

This sequence belongs to the TRAFAC class translation factor GTPase superfamily. Classic translation factor GTPase family. LepA subfamily.

The protein resides in the cell inner membrane. It catalyses the reaction GTP + H2O = GDP + phosphate + H(+). Its function is as follows. Required for accurate and efficient protein synthesis under certain stress conditions. May act as a fidelity factor of the translation reaction, by catalyzing a one-codon backward translocation of tRNAs on improperly translocated ribosomes. Back-translocation proceeds from a post-translocation (POST) complex to a pre-translocation (PRE) complex, thus giving elongation factor G a second chance to translocate the tRNAs correctly. Binds to ribosomes in a GTP-dependent manner. The chain is Elongation factor 4 from Yersinia enterocolitica serotype O:8 / biotype 1B (strain NCTC 13174 / 8081).